We begin with the raw amino-acid sequence, 77 residues long: uncharacterized protein (77 aa).

2 helical membrane passes run 3 to 23 (FNFI…SFLF) and 35 to 55 (IGAI…VALL).

The protein localises to the cell membrane. This is an uncharacterized protein from Haemophilus influenzae (strain ATCC 51907 / DSM 11121 / KW20 / Rd).